Consider the following 548-residue polypeptide: Uridine-cytidine kinase-like 1 (548 aa).

The segment covering Met-1–Ala-18 has biased composition (low complexity). Positions Met-1–Thr-74 are disordered. 2 positions are modified to phosphoserine: Ser-56 and Ser-63. Gly-105–Thr-112 contributes to the ATP binding site. Ser-539 is modified (phosphoserine).

Belongs to the uridine kinase family. Interacts with RNF19B. Post-translationally, ubiquitinated by RNF19B; which induces proteasomal degradation.

It localises to the cytoplasm. The protein resides in the nucleus. The catalysed reaction is uridine + ATP = UMP + ADP + H(+). It carries out the reaction cytidine + ATP = CMP + ADP + H(+). It participates in pyrimidine metabolism; UMP biosynthesis via salvage pathway; UMP from uridine: step 1/1. Functionally, may contribute to UTP accumulation needed for blast transformation and proliferation. The polypeptide is Uridine-cytidine kinase-like 1 (Uckl1) (Mus musculus (Mouse)).